The following is a 1035-amino-acid chain: Potassium-transporting ATPase alpha chain 1 (1035 aa).

Positions 1–41 (MGKADNYELYSVELGPGPGGDMAAKMSKKKKAGGGGGKRKE) are disordered. The Cytoplasmic portion of the chain corresponds to 1–98 (MGKADNYELY…NALRPPRGTP (98 aa)). Tyr7 and Tyr10 each carry phosphotyrosine. Residues 26–40 (MSKKKKAGGGGGKRK) show a composition bias toward basic residues. Position 27 is a phosphoserine (Ser27). A helical membrane pass occupies residues 99-119 (EYVKFARQLAGGLQCLMWVAA). Topologically, residues 120–142 (AICLIAFAIQASEGDLTTDDNLY) are lumenal. The helical transmembrane segment at 143–163 (LALALIAVVVVTGCFGYYQEF) threads the bilayer. Topologically, residues 164–299 (KSTNIIASFK…NEKTPIAIEI (136 aa)) are cytoplasmic. The chain crosses the membrane as a helical span at residues 300–319 (EHFVDIIAGLAILFGATFFV). Residues 320-331 (VAMCIGYTFLRA) lie on the Lumenal side of the membrane. Residues 332–349 (MVFFMAIVVAYVPEGLLA) traverse the membrane as a helical segment. 4 residues coordinate K(+): Val340, Ala341, Val343, and Glu345. Over 350 to 783 (TVTVCLSLTA…EQGRLIFDNL (434 aa)) the chain is Cytoplasmic. The active-site 4-aspartylphosphate intermediate is Asp387. Residues Asp387 and Thr389 each coordinate Mg(2+). 2 positions are modified to phosphoserine: Ser463 and Ser601. Mg(2+) is bound by residues Asp728 and Asp732. The chain crosses the membrane as a helical span at residues 784–803 (KKSIAYTLTKNIPELTPYLI). Position 797 (Glu797) interacts with K(+). The Lumenal segment spans residues 804 to 813 (YITVSVPLPL). Residues 814 to 834 (GCITILFIELCTDIFPSVSLA) traverse the membrane as a helical segment. Glu822 contacts K(+). Topologically, residues 835–854 (YEKAESDIMHLRPRNPKRDR) are cytoplasmic. Ser840 carries the post-translational modification Phosphoserine. The chain crosses the membrane as a helical span at residues 855 to 877 (LVNEPLAAYSYFQIGAIQSFAGF). At 878 to 929 (TDYFTAMAQEGWFPLLCVGLRPQWEDHHLQDLQDSYGQEWTFGQRLYQQYTC) the chain is on the lumenal side. Residues 930–949 (YTVFFISIEMCQIADVLIRK) traverse the membrane as a helical segment. Residues 950 to 963 (TRRLSAFQQGFFRN) lie on the Cytoplasmic side of the membrane. Ser954 bears the Phosphoserine; by PKA mark. A helical transmembrane segment spans residues 964-982 (RILVIAIVFQVCIGCFLCY). Residues 983–997 (CPGMPNIFNFMPIRF) are Lumenal-facing. The chain crosses the membrane as a helical span at residues 998-1018 (QWWLVPMPFGLLIFVYDEIRK). At 1019–1035 (LGVRCCPGSWWDQELYY) the chain is on the cytoplasmic side.

Belongs to the cation transport ATPase (P-type) (TC 3.A.3) family. Type IIC subfamily. In terms of assembly, the gastric H(+)/K(+) ATPase pump is composed of the catalytic alpha subunit ATP4A and the regulatory beta subunit ATP4B. Interacts (via the P-domain) with ATP4B (via N-terminus); this interaction stabilizes the lumenal-open E2 conformation state and prevents the reverse reaction of the transport cycle.

Its subcellular location is the apical cell membrane. The protein localises to the cell membrane. The enzyme catalyses K(+)(out) + ATP + H2O + H(+)(in) = K(+)(in) + ADP + phosphate + 2 H(+)(out). The catalytic subunit of the gastric H(+)/K(+) ATPase pump which transports H(+) ions in exchange for K(+) ions across the apical membrane of parietal cells. Uses ATP as an energy source to pump H(+) ions to the gastric lumen while transporting K(+) ion from the lumen into the cell. Remarkably generates a million-fold proton gradient across the gastric parietal cell membrane, acidifying the gastric juice down to pH 1. Within a transport cycle, the transfer of a H(+) ion across the membrane is coupled to ATP hydrolysis and is associated with a transient phosphorylation that shifts the pump conformation from inward-facing (E1) to outward-facing state (E2). The release of the H(+) ion in the stomach lumen is followed by binding of K(+) ion converting the pump conformation back to the E1 state. The chain is Potassium-transporting ATPase alpha chain 1 (ATP4A) from Oryctolagus cuniculus (Rabbit).